The chain runs to 2925 residues: Otogelin (2925 aa).

The first 25 residues, 1-25 (MGVLASALCWLLCVWLPWGEQAAES), serve as a signal peptide directing secretion. Residues 39–69 (GRSGARGMRNVKGMRNGPAQTRVSSSSSHQE) form a disordered region. Residues 56–69 (PAQTRVSSSSSHQE) show a composition bias toward polar residues. One can recognise an EGF-like domain in the interval 102-139 (HRAKCAPSYLFSCFNGGECVHPAFCDCRRFNATGPRCQ). 5 disulfides stabilise this stretch: Cys-106–Cys-120, Cys-114–Cys-126, Cys-128–Cys-138, Cys-152–Cys-285, and Cys-199–Cys-206. Residues 150-322 (SICRAWGQHH…SWQEQAPNQP (173 aa)) form the VWFD 1 domain. Positions 316–335 (EQAPNQPPGPTTSSLPRPPC) are disordered. Residues 326 to 335 (TTSSLPRPPC) are compositionally biased toward polar residues. A VWFD 2 domain is found at 512–688 (AECSVTGDIH…NSWKTLSACS (177 aa)). 3 disulfides stabilise this stretch: Cys-514–Cys-652, Cys-536–Cys-687, and Cys-558–Cys-566. In terms of domain architecture, TIL spans 780–844 (CEASKEYSPC…ADLCVPRNQC (65 aa)). The N-linked (GlcNAc...) asparagine glycan is linked to Asn-914. In terms of domain architecture, VWFD 3 spans 984–1152 (STCTAYGDRH…SWAAVECPDT (169 aa)). 2 cysteine pairs are disulfide-bonded: Cys-986–Cys-1115 and Cys-1030–Cys-1037. Residues 1476–1540 (LGNETLPPSQ…PVVSPGPTQT (65 aa)) form a disordered region. A glycan (N-linked (GlcNAc...) asparagine) is linked at Asn-1478. Residues 1502-1528 (PRTPTHRPALTPAAPLTTALNPPVTAT) are compositionally biased toward low complexity. Asn-1612 is a glycosylation site (N-linked (GlcNAc...) asparagine). Disordered regions lie at residues 1636 to 1679 (GHGS…HKAV), 1693 to 1715 (VPQPTQAQSASSPSTPLTVAGTA), and 1737 to 1788 (KGEA…ASLS). Residues 1650–1659 (SLTASPSSRP) show a composition bias toward polar residues. A compositionally biased stretch (low complexity) spans 1694–1708 (PQPTQAQSASSPSTP). Residues 1751–1764 (SPQPHPLPSAPPRP) are compositionally biased toward pro residues. A VWFD 4 domain is found at 2110–2289 (CRCSIFPDLS…SWQVPSSLTS (180 aa)). Intrachain disulfides connect Cys-2112–Cys-2249, Cys-2840–Cys-2889, Cys-2854–Cys-2903, Cys-2865–Cys-2920, and Cys-2869–Cys-2922. The region spanning 2840-2925 (CKKVTIRMTI…EPTDCACQWS (86 aa)) is the CTCK domain.

It belongs to the otogelin family. In terms of processing, N-glycosylated. Not O-glycosylated.

It is found in the apical cell membrane. Its subcellular location is the secreted. It localises to the extracellular space. Functionally, glycoprotein specific to acellular membranes of the inner ear. May be required for the anchoring of the otoconial membranes and cupulae to the underlying neuroepithelia in the vestibule. May be involved in the organization and/or stabilization of the fibrillar network that compose the tectorial membrane in the cochlea. May play a role in mechanotransduction processes. This chain is Otogelin (OTOG), found in Homo sapiens (Human).